A 35-amino-acid polypeptide reads, in one-letter code: Photosystem II reaction center protein T (35 aa).

The chain crosses the membrane as a helical span at residues 3 to 23 (ALVYTFLLVSTLGIIFFAIFF).

The protein belongs to the PsbT family. PSII is composed of 1 copy each of membrane proteins PsbA, PsbB, PsbC, PsbD, PsbE, PsbF, PsbH, PsbI, PsbJ, PsbK, PsbL, PsbM, PsbT, PsbY, PsbZ, Psb30/Ycf12, at least 3 peripheral proteins of the oxygen-evolving complex and a large number of cofactors. It forms dimeric complexes.

The protein localises to the plastid. It is found in the chloroplast thylakoid membrane. Functionally, found at the monomer-monomer interface of the photosystem II (PS II) dimer, plays a role in assembly and dimerization of PSII. PSII is a light-driven water plastoquinone oxidoreductase, using light energy to abstract electrons from H(2)O, generating a proton gradient subsequently used for ATP formation. The sequence is that of Photosystem II reaction center protein T from Gossypium barbadense (Sea Island cotton).